Reading from the N-terminus, the 226-residue chain is Large ribosomal subunit protein uL1 (226 aa).

The protein belongs to the universal ribosomal protein uL1 family. As to quaternary structure, part of the 50S ribosomal subunit.

Functionally, binds directly to 23S rRNA. The L1 stalk is quite mobile in the ribosome, and is involved in E site tRNA release. In terms of biological role, protein L1 is also a translational repressor protein, it controls the translation of the L11 operon by binding to its mRNA. The protein is Large ribosomal subunit protein uL1 of Mycoplasmoides gallisepticum (strain R(low / passage 15 / clone 2)) (Mycoplasma gallisepticum).